Consider the following 357-residue polypeptide: Phospho-N-acetylmuramoyl-pentapeptide-transferase (357 aa).

Transmembrane regions (helical) follow at residues 23 to 43 (AIFSLLTSFFINLYIGPYFIY), 70 to 90 (TMGGIFIIFSILFSTILYCNL), 91 to 111 (SNIYIWYVISILIGYGLIGFI), 127 to 147 (LKWKYFFLSIIAFIFICMIKI), 171 to 191 (YLYIFLSYFVLVGTSNAVNLT), 196 to 216 (GLAIMPVIFLTCGLTLISLFS), 236 to 256 (LAILCMAIVGSGLGFLWFNSY), 260 to 280 (VFMGDVGSLALGGSLGAIAIL), 286 to 306 (LLIIMGGIFVFETISVILQII), and 334 to 354 (LIIVRFWIVSLILLLISLISL).

It belongs to the glycosyltransferase 4 family. MraY subfamily. Requires Mg(2+) as cofactor.

The protein localises to the cell inner membrane. It carries out the reaction UDP-N-acetyl-alpha-D-muramoyl-L-alanyl-gamma-D-glutamyl-meso-2,6-diaminopimeloyl-D-alanyl-D-alanine + di-trans,octa-cis-undecaprenyl phosphate = di-trans,octa-cis-undecaprenyl diphospho-N-acetyl-alpha-D-muramoyl-L-alanyl-D-glutamyl-meso-2,6-diaminopimeloyl-D-alanyl-D-alanine + UMP. The protein operates within cell wall biogenesis; peptidoglycan biosynthesis. Catalyzes the initial step of the lipid cycle reactions in the biosynthesis of the cell wall peptidoglycan: transfers peptidoglycan precursor phospho-MurNAc-pentapeptide from UDP-MurNAc-pentapeptide onto the lipid carrier undecaprenyl phosphate, yielding undecaprenyl-pyrophosphoryl-MurNAc-pentapeptide, known as lipid I. This chain is Phospho-N-acetylmuramoyl-pentapeptide-transferase, found in Buchnera aphidicola subsp. Acyrthosiphon pisum (strain 5A).